We begin with the raw amino-acid sequence, 268 residues long: Helix-loop-helix protein 25 (268 aa).

The segment covering 1-23 has biased composition (polar residues); it reads MPKVIQSSMSDYRSVPYNQTPKS. Positions 1–29 are disordered; sequence MPKVIQSSMSDYRSVPYNQTPKSASERKR. Residues 92 to 105 form a basic motif region; that stretch reads ERRKVKTEREKIRR. A bHLH domain is found at 92–149; that stretch reads ERRKVKTEREKIRRKKQDDCYAELKFFILNKQMGSYEQRLKLERITILEIIIDYIKHN. The helix-loop-helix motif stretch occupies residues 106–149; it reads KKQDDCYAELKFFILNKQMGSYEQRLKLERITILEIIIDYIKHN.

The protein resides in the nucleus. Its function is as follows. Probable transcription factor. Modulates lifespan and also recovery from the developmentally arrested larval state known as dauer, perhaps acting upstream of phosphatase PTEN/daf-18. Regulates expression of genes involved in cell division, cell-cycle regulation, and sexual reproduction, including daf-18. The polypeptide is Helix-loop-helix protein 25 (Caenorhabditis elegans).